The sequence spans 159 residues: Single-stranded DNA-binding protein 2 (159 aa).

In terms of domain architecture, SSB spans 2-104 (MNRVVLVGRL…VVAESVQFLE (103 aa)). The disordered stretch occupies residues 106-159 (RNHAEGATSNNYQNEANYSNNNKTSSYRADTSQKSDSFANEGKPIDINPDDLPF). Positions 114–127 (SNNYQNEANYSNNN) are enriched in low complexity. A compositionally biased stretch (polar residues) spans 128–143 (KTSSYRADTSQKSDSF).

Homotetramer.

In Listeria innocua serovar 6a (strain ATCC BAA-680 / CLIP 11262), this protein is Single-stranded DNA-binding protein 2 (ssb2).